Consider the following 371-residue polypeptide: Beta sliding clamp (371 aa).

This sequence belongs to the beta sliding clamp family. In terms of assembly, forms a ring-shaped head-to-tail homodimer around DNA which binds and tethers DNA polymerases and other proteins to the DNA. The DNA replisome complex has a single clamp-loading complex (3 tau and 1 each of delta, delta', psi and chi subunits) which binds 3 Pol III cores (1 core on the leading strand and 2 on the lagging strand) each with a beta sliding clamp dimer. Additional proteins in the replisome are other copies of gamma, psi and chi, Ssb, DNA helicase and RNA primase.

The protein resides in the cytoplasm. Its function is as follows. Confers DNA tethering and processivity to DNA polymerases and other proteins. Acts as a clamp, forming a ring around DNA (a reaction catalyzed by the clamp-loading complex) which diffuses in an ATP-independent manner freely and bidirectionally along dsDNA. Initially characterized for its ability to contact the catalytic subunit of DNA polymerase III (Pol III), a complex, multichain enzyme responsible for most of the replicative synthesis in bacteria; Pol III exhibits 3'-5' exonuclease proofreading activity. The beta chain is required for initiation of replication as well as for processivity of DNA replication. This chain is Beta sliding clamp (dnaN), found in Treponema pallidum (strain Nichols).